We begin with the raw amino-acid sequence, 185 residues long: Prenylated Rab acceptor protein 1 (185 aa).

Topologically, residues 1-78 (MAAEKDQQKD…RNVEYYQSNY (78 aa)) are cytoplasmic. Residues 30 to 54 (AGRERLERRRATIRPWSSFVDQRRF) are required for interaction with prenylated RAB3A and VAMP2. 2 consecutive transmembrane segments (helical) span residues 79-94 (VFVF…VTSP) and 95-112 (MLLV…ILYL). The Cytoplasmic portion of the chain corresponds to 113–131 (RTLQSKFVLFGREVSPAHQ). 2 consecutive transmembrane segments (helical) span residues 132-148 (YALA…LAGA) and 149-165 (GSAV…VIGS). A required for interaction with GDI1 region spans residues 165-185 (SHAAFHQMEAVDGEELQMEPV). Topologically, residues 166-185 (HAAFHQMEAVDGEELQMEPV) are cytoplasmic. The segment at 175–185 (VDGEELQMEPV) is required for interaction with prenylated RAB3A and VAMP2. The interval 175–185 (VDGEELQMEPV) is homodimerization.

The protein belongs to the PRA1 family. As to quaternary structure, homodimer. Interacts with VAMP2 (synaptobrevin-2), prenylated Rab proteins, GDI1, NDRG1 and PCLO.

The protein localises to the cell membrane. The protein resides in the cytoplasm. It is found in the golgi apparatus. It localises to the cytoplasmic vesicle. Its subcellular location is the secretory vesicle. The protein localises to the synaptic vesicle. In terms of biological role, general Rab protein regulator required for vesicle formation from the Golgi complex. May control vesicle docking and fusion by mediating the action of Rab GTPases to the SNARE complexes. In addition it inhibits the removal of Rab GTPases from the membrane by GDI1. This Canis lupus familiaris (Dog) protein is Prenylated Rab acceptor protein 1 (RABAC1).